We begin with the raw amino-acid sequence, 185 residues long: Large ribosomal subunit protein bL25 (185 aa).

Belongs to the bacterial ribosomal protein bL25 family. CTC subfamily. As to quaternary structure, part of the 50S ribosomal subunit; part of the 5S rRNA/L5/L18/L25 subcomplex. Contacts the 5S rRNA. Binds to the 5S rRNA independently of L5 and L18.

Its function is as follows. This is one of the proteins that binds to the 5S RNA in the ribosome where it forms part of the central protuberance. In Chlamydia caviae (strain ATCC VR-813 / DSM 19441 / 03DC25 / GPIC) (Chlamydophila caviae), this protein is Large ribosomal subunit protein bL25.